The sequence spans 150 residues: Large ribosomal subunit protein bL9 (150 aa).

This sequence belongs to the bacterial ribosomal protein bL9 family.

In terms of biological role, binds to the 23S rRNA. The chain is Large ribosomal subunit protein bL9 from Paraburkholderia phytofirmans (strain DSM 17436 / LMG 22146 / PsJN) (Burkholderia phytofirmans).